Consider the following 130-residue polypeptide: Small ribosomal subunit protein uS9 (130 aa).

The disordered stretch occupies residues 99–130 (KRAGLLTRDPRMKERKKPGLKAARRSPQFSKR). Over residues 111 to 130 (KERKKPGLKAARRSPQFSKR) the composition is skewed to basic residues.

The protein belongs to the universal ribosomal protein uS9 family.

The protein is Small ribosomal subunit protein uS9 of Staphylococcus aureus (strain Mu3 / ATCC 700698).